Here is a 117-residue protein sequence, read N- to C-terminus: Large ribosomal subunit protein uL18 (117 aa).

This sequence belongs to the universal ribosomal protein uL18 family. Part of the 50S ribosomal subunit; part of the 5S rRNA/L5/L18/L25 subcomplex. Contacts the 5S and 23S rRNAs.

Functionally, this is one of the proteins that bind and probably mediate the attachment of the 5S RNA into the large ribosomal subunit, where it forms part of the central protuberance. This Acidithiobacillus ferrooxidans (strain ATCC 23270 / DSM 14882 / CIP 104768 / NCIMB 8455) (Ferrobacillus ferrooxidans (strain ATCC 23270)) protein is Large ribosomal subunit protein uL18.